Consider the following 111-residue polypeptide: Small ribosomal subunit protein bS18 (111 aa).

Residues 1-32 (MDLENTENVENNNNNEEEVKAKGERKAHFNKE) form a disordered region. Basic and acidic residues predominate over residues 17–32 (EEVKAKGERKAHFNKE).

The protein belongs to the bacterial ribosomal protein bS18 family. As to quaternary structure, part of the 30S ribosomal subunit. Forms a tight heterodimer with protein bS6.

Binds as a heterodimer with protein bS6 to the central domain of the 16S rRNA, where it helps stabilize the platform of the 30S subunit. This chain is Small ribosomal subunit protein bS18, found in Brachyspira hyodysenteriae (strain ATCC 49526 / WA1).